The following is a 385-amino-acid chain: Non-structural maintenance of chromosomes element 4 homolog A (385 aa).

The segment at 1 to 69 (MSGDSSGRGP…PSDSGDEMMD (69 aa)) is disordered. Basic and acidic residues-rich tracts occupy residues 10–21 (PEGRGRGRDPHR) and 42–55 (SARE…RPSL). Over residues 56 to 68 (EDTEPSDSGDEMM) the composition is skewed to acidic residues. Threonine 345 bears the Phosphothreonine mark. Serine 377 carries the phosphoserine modification.

This sequence belongs to the NSE4 family. In terms of assembly, component of the SMC5-SMC6 complex which consists at least of SMC5, SMC6, NSMCE2, NSMCE1, NSMCE4A or EID3 and NSMCE3. NSMCE1, NSMCE4A or EID3 and NSMCE3 probably form a subcomplex that bridges the head domains of the SMC5:SMC6 heterodimer. Interacts with NSMCE3.

The protein resides in the nucleus. It is found in the chromosome. Its subcellular location is the telomere. Component of the SMC5-SMC6 complex, a complex involved in DNA double-strand breaks by homologous recombination. The complex may promote sister chromatid homologous recombination by recruiting the SMC1-SMC3 cohesin complex to double-strand breaks. The complex is required for telomere maintenance via recombination in ALT (alternative lengthening of telomeres) cell lines and mediates sumoylation of shelterin complex (telosome) components which is proposed to lead to shelterin complex disassembly in ALT-associated PML bodies (APBs). Is involved in positive regulation of response to DNA damage stimulus. The sequence is that of Non-structural maintenance of chromosomes element 4 homolog A (NSMCE4A) from Homo sapiens (Human).